The primary structure comprises 311 residues: GTP cyclohydrolase FolE2 (311 aa).

It belongs to the GTP cyclohydrolase IV family.

It catalyses the reaction GTP + H2O = 7,8-dihydroneopterin 3'-triphosphate + formate + H(+). The protein operates within cofactor biosynthesis; 7,8-dihydroneopterin triphosphate biosynthesis; 7,8-dihydroneopterin triphosphate from GTP: step 1/1. In terms of biological role, converts GTP to 7,8-dihydroneopterin triphosphate. This Xanthomonas campestris pv. campestris (strain 8004) protein is GTP cyclohydrolase FolE2.